We begin with the raw amino-acid sequence, 75 residues long: MSCSYEFIVDVNVCSTTYNRRYFHKFQLHSLVNTNVNVNKKYAYPSAGVDIVAVATTLPFIVAVICIVFDEVNVF.

Residues 49–69 (VDIVAVATTLPFIVAVICIVF) form a helical membrane-spanning segment.

It localises to the host membrane. This is an uncharacterized protein from Saccharolobus islandicus (Sulfolobus islandicus).